A 374-amino-acid polypeptide reads, in one-letter code: DNA-directed RNA polymerase subunit alpha (374 aa).

An alpha N-terminal domain (alpha-NTD) region spans residues 1 to 270 (MIFDEDSSSV…DQFQQFINFD (270 aa)). The tract at residues 282 to 374 (KDVLPYDSNL…ESLSKQYSEE (93 aa)) is alpha C-terminal domain (alpha-CTD).

It belongs to the RNA polymerase alpha chain family. Homodimer. The RNAP catalytic core consists of 2 alpha, 1 beta, 1 beta' and 1 omega subunit. When a sigma factor is associated with the core the holoenzyme is formed, which can initiate transcription.

It carries out the reaction RNA(n) + a ribonucleoside 5'-triphosphate = RNA(n+1) + diphosphate. DNA-dependent RNA polymerase catalyzes the transcription of DNA into RNA using the four ribonucleoside triphosphates as substrates. In Ehrlichia ruminantium (strain Welgevonden), this protein is DNA-directed RNA polymerase subunit alpha.